A 495-amino-acid polypeptide reads, in one-letter code: Sialin (495 aa).

Residues 1–18 (MRSPVRDLARNDGEESTD) are compositionally biased toward basic and acidic residues. Residues 1–24 (MRSPVRDLARNDGEESTDRTPLLP) form a disordered region. Residues 1 to 41 (MRSPVRDLARNDGEESTDRTPLLPGAPRAEAAPVCCSARYN) lie on the Cytoplasmic side of the membrane. Ser3 carries the post-translational modification Phosphoserine. The short motif at 22–23 (LL) is the Dileucine internalization motif element. Residues 42-62 (LAILAFFGFFIVYALRVNLSV) form a helical membrane-spanning segment. Over 63–109 (ALVDMVDSNTTLEDNRTSKACPEHSAPIKVHHNQTGKKYQWDAETQG) the chain is Lumenal. 3 N-linked (GlcNAc...) asparagine glycosylation sites follow: Asn71, Asn77, and Asn95. The chain crosses the membrane as a helical span at residues 110 to 130 (WILGSFFYGYIITQIPGGYVA). Topologically, residues 131-136 (SKIGGK) are cytoplasmic. A helical membrane pass occupies residues 137-157 (MLLGFGILGTAVLTLFTPIAA). Asp158 is a topological domain (lumenal). The chain crosses the membrane as a helical span at residues 159 to 179 (LGVGPLIVLRALEGLGEGVTF). Over 180–200 (PAMHAMWSSWAPPLERSKLLS) the chain is Cytoplasmic. Residues 201–221 (ISYAGAQLGTVISLPLSGIIC) form a helical membrane-spanning segment. The Lumenal segment spans residues 222 to 227 (YYMNWT). The chain crosses the membrane as a helical span at residues 228–248 (YVFYFFGTIGIFWFLLWIWLV). Residues 249 to 279 (SDTPQKHKRISHYEKEYILSSLRNQLSSQKS) lie on the Cytoplasmic side of the membrane. Residues 280–300 (VPWVPILKSLPLWAIVVAHFS) traverse the membrane as a helical segment. The Lumenal segment spans residues 301 to 328 (YNWTFYTLLTLLPTYMKEILRFNVQENG). A helical membrane pass occupies residues 329–349 (FLSSLPYLGSWLCMILSGQAA). Topologically, residues 350-365 (DNLRAKWNFSTLCVRR) are cytoplasmic. The chain crosses the membrane as a helical span at residues 366-386 (IFSLIGMIGPAVFLVAAGFIG). Topologically, residues 387 to 391 (CDYSL) are lumenal. A helical transmembrane segment spans residues 392–412 (AVAFLTISTTLGGFCSSGFSI). Topologically, residues 413-423 (NHLDIAPSYAG) are cytoplasmic. The chain crosses the membrane as a helical span at residues 424–444 (ILLGITNTFATIPGMVGPVIA). Topologically, residues 445–457 (KSLTPDNTVGEWQ) are lumenal. A helical membrane pass occupies residues 458 to 478 (TVFYIAAAINVFGAIFFTLFA). Over 479–495 (KGEVQNWALNDHHGHRH) the chain is Cytoplasmic.

Belongs to the major facilitator superfamily. Sodium/anion cotransporter family. In terms of tissue distribution, in the adult, detected in placenta, kidney and pancreas. Abundant in the endothelial cells of tumors from ovary, colon, breast and lung, but is not detected in endothelial cells from the corresponding normal tissues. Highly expressed in salivary glands and liver, with lower levels of expression in brain, spleen kidney, muscle and pancreas. Expressed in acinar cells of salivary glands (at protein level).

It localises to the basolateral cell membrane. The protein localises to the cytoplasmic vesicle. It is found in the secretory vesicle. The protein resides in the synaptic vesicle membrane. Its subcellular location is the lysosome membrane. It carries out the reaction N-acetylneuraminate(in) + H(+)(in) = N-acetylneuraminate(out) + H(+)(out). The catalysed reaction is D-glucuronate(out) + H(+)(out) = D-glucuronate(in) + H(+)(in). It catalyses the reaction 2 nitrate(out) + H(+)(out) = 2 nitrate(in) + H(+)(in). The enzyme catalyses L-aspartate(out) = L-aspartate(in). It carries out the reaction L-glutamate(out) = L-glutamate(in). The catalysed reaction is N-acetyl-L-aspartyl-L-glutamate(out) = N-acetyl-L-aspartyl-L-glutamate(in). Functionally, multifunctional anion transporter that operates via two distinct transport mechanisms, namely proton-coupled anion cotransport and membrane potential-dependent anion transport. Electroneutral proton-coupled acidic monosaccharide symporter, with a sugar to proton stoichiometry of 1:1. Exports glucuronic acid and free sialic acid derived from sialoglycoconjugate degradation out of lysosomes, driven by outwardly directed lysosomal pH gradient. May regulate lysosome function and metabolism of sialylated conjugates that impact oligodendrocyte lineage differentiation and myelinogenesis in the central nervous system. Electrogenic proton-coupled nitrate symporter that transports nitrate ions across the basolateral membrane of salivary gland acinar cells, with nitrate to proton stoichiometry of 2:1. May contribute to nitrate clearance from serum by salivary glands, where it is further concentrated and secreted in the saliva. Uses membrane potential to drive the uptake of acidic amino acids and peptides into synaptic vesicles. Responsible for synaptic vesicular storage of L-aspartate and L-glutamate in pinealocytes as well as vesicular uptake of N-acetyl-L-aspartyl-L-glutamate neuropeptide, relevant to aspartegic-associated glutamatergic neurotransmission and activation of metabotropic receptors that inhibit subsequent transmitter release. Its function is as follows. Receptor for CM101, a polysaccharide produced by group B Streptococcus with antipathoangiogenic properties. This is Sialin (SLC17A5) from Homo sapiens (Human).